We begin with the raw amino-acid sequence, 843 residues long: Major vault protein alpha (843 aa).

Ala-2 carries the post-translational modification N-acetylalanine. 9 MVP repeats span residues 2-56 (ADLN…IPQR), 57-111 (NYCT…KVTA), 112-163 (LQVV…EEIK), 164-216 (ATII…EIVN), 217-272 (AYVL…GEVH), 273-324 (ITTL…IHNI), 325-376 (YVLT…KRES), 377-442 (IPLD…STRV), and 443-505 (VTYR…FLGP). The segment at 643–663 (QEAAARHEAERLEQGARGRLE) is disordered. Residues 646 to 663 (AARHEAERLEQGARGRLE) are compositionally biased toward basic and acidic residues.

The vault ribonucleoprotein particle is a huge (400 A x 670 A) cage structure of 12.9 MDa. It consists of a dimer of half-vaults, with each half-vault comprising 39 identical major vault protein (MVP) chains. Dictyostelium is one of the few organisms in which the major component is actually two proteins (alpha and beta).

The protein localises to the cytoplasm. It is found in the nucleus. Its function is as follows. Unknown, though MVP-alpha is required for normal vault structure. This chain is Major vault protein alpha (mvpA), found in Dictyostelium discoideum (Social amoeba).